The chain runs to 477 residues: Tripartite motif-containing protein 72 (477 aa).

Residues C14, C17, C29, H31, C34, C37, C53, C56, C86, H89, C97, D100, C105, C108, H114, and H117 each coordinate Zn(2+). The RING-type zinc-finger motif lies at 14-57; sequence CPLCLQLFDAPVTAECGHSFCRACLGRVAGEPAADGTVLCPCCQ. A B box-type zinc finger spans residues 81-122; it reads VPQGHCEEHLDPLSIYCEQDRALVCGVCASLGSHRGHRLLPA. The stretch at 135 to 232 forms a coiled coil; that stretch reads QQKLQLQEAC…EKVLEEVADK (98 aa). C144 is subject to S-nitrosocysteine. S255 carries the phosphoserine modification. One can recognise a B30.2/SPRY domain in the interval 271–475; the sequence is DFKFQVWRKM…PLLLVGPEGA (205 aa).

The protein belongs to the TRIM/RBCC family. As to quaternary structure, homodimer. Homooligomer; disulfide-linked. Oligomerizes on the phospholipid membrane. Interacts with DYSF and CAV3. In terms of processing, disulfide bond formation at Cys-242 occurs in case of membrane damage that cause the entry of the oxidized milieu of the extracellular space, resulting in homooligomerization. Post-translationally, S-nitrosylation at Cys-144 stabilizes TRIM72 and protects against oxidation-induced protein degradation and cell death.

The protein localises to the cell membrane. The protein resides in the sarcolemma. It localises to the cytoplasmic vesicle membrane. It carries out the reaction S-ubiquitinyl-[E2 ubiquitin-conjugating enzyme]-L-cysteine + [acceptor protein]-L-lysine = [E2 ubiquitin-conjugating enzyme]-L-cysteine + N(6)-ubiquitinyl-[acceptor protein]-L-lysine.. It functions in the pathway protein modification; protein ubiquitination. With respect to regulation, specifically binds phosphatidylserine. The binding to phospholipids enhances ubiquitination activity. In terms of biological role, muscle-specific E3 ubiquitin-protein ligase that plays a central role in cell membrane repair by nucleating the assembly of the repair machinery at injury sites. Its ubiquitination activity is mediated by E2 ubiquitin-conjugating enzymes UBE2D1, UBE2D2 and UBE2D3. Acts as a sensor of oxidation: upon membrane damage, entry of extracellular oxidative environment results in disulfide bond formation and homooligomerization at the injury site. This oligomerization acts as a nucleation site for recruitment of TRIM72-containing vesicles to the injury site, leading to membrane patch formation. Probably acts upstream of the Ca(2+)-dependent membrane resealing process. Required for transport of DYSF to sites of cell injury during repair patch formation. Regulates membrane budding and exocytosis. May be involved in the regulation of the mobility of KCNB1-containing endocytic vesicles. This Homo sapiens (Human) protein is Tripartite motif-containing protein 72.